The sequence spans 130 residues: Holin-like protein CidA (130 aa).

The next 4 membrane-spanning stretches (helical) occupy residues 6–26 (FVIK…IGTE), 31–51 (LHIP…LLQF), 65–85 (FLLK…MDVA), and 93–113 (ILFF…SGYI).

The protein belongs to the CidA/LrgA family. CidA subfamily.

It is found in the cell membrane. Increases the activity of extracellular murein hydrolases possibly by mediating their export via hole formation. Inhibited by the antiholin-like proteins LrgAB. In an unstressed cell, the LrgAB products probably inhibit the function of the CidAB proteins. When a cell is stressed by the addition of antibiotics or by other factors in the environment, the CidAB proteins possibly oligomerize within the bacterial cell membrane, creating lesions that disrupt the proton motive force, which in turn results in loss of cell viability. These lesions are also hypothesized to regulate the subsequent cell lysis by either allowing the murein hydrolases access to the cell wall substrate and/or regulating their activity by a possible change in the cell wall pH that results from loss of membrane potential. This Staphylococcus epidermidis (strain ATCC 35984 / DSM 28319 / BCRC 17069 / CCUG 31568 / BM 3577 / RP62A) protein is Holin-like protein CidA.